A 279-amino-acid polypeptide reads, in one-letter code: Shikimate dehydrogenase (NADP(+)) (279 aa).

Shikimate is bound by residues 16–18 and Thr63; that span reads SRS. The Proton acceptor role is filled by Lys67. 2 residues coordinate shikimate: Asn88 and Asp103. NADP(+) contacts are provided by residues 128-132 and Met219; that span reads GAGGA. Position 221 (Tyr221) interacts with shikimate. Residue Gly243 coordinates NADP(+).

The protein belongs to the shikimate dehydrogenase family. Homodimer.

It carries out the reaction shikimate + NADP(+) = 3-dehydroshikimate + NADPH + H(+). It functions in the pathway metabolic intermediate biosynthesis; chorismate biosynthesis; chorismate from D-erythrose 4-phosphate and phosphoenolpyruvate: step 4/7. Involved in the biosynthesis of the chorismate, which leads to the biosynthesis of aromatic amino acids. Catalyzes the reversible NADPH linked reduction of 3-dehydroshikimate (DHSA) to yield shikimate (SA). The polypeptide is Shikimate dehydrogenase (NADP(+)) (Aromatoleum aromaticum (strain DSM 19018 / LMG 30748 / EbN1) (Azoarcus sp. (strain EbN1))).